Reading from the N-terminus, the 432-residue chain is Phosphomethylpyrimidine synthase (432 aa).

Substrate contacts are provided by residues N66, M95, Y124, H163, 185-187, 226-229, and E265; these read SRG and DGLR. H269 is a Zn(2+) binding site. Position 292 (Y292) interacts with substrate. H333 is a Zn(2+) binding site. [4Fe-4S] cluster-binding residues include C409, C412, and C416.

This sequence belongs to the ThiC family. The cofactor is [4Fe-4S] cluster.

The enzyme catalyses 5-amino-1-(5-phospho-beta-D-ribosyl)imidazole + S-adenosyl-L-methionine = 4-amino-2-methyl-5-(phosphooxymethyl)pyrimidine + CO + 5'-deoxyadenosine + formate + L-methionine + 3 H(+). It functions in the pathway cofactor biosynthesis; thiamine diphosphate biosynthesis. Functionally, catalyzes the synthesis of the hydroxymethylpyrimidine phosphate (HMP-P) moiety of thiamine from aminoimidazole ribotide (AIR) in a radical S-adenosyl-L-methionine (SAM)-dependent reaction. The chain is Phosphomethylpyrimidine synthase from Thermoanaerobacter sp. (strain X514).